The primary structure comprises 245 residues: Exosome complex component RRP41 (245 aa).

Position 2 is an N-acetylalanine (A2).

Belongs to the RNase PH family. As to quaternary structure, component of the RNA exosome core complex (Exo-9), composed of EXOSC1, EXOSC2, EXOSC3, EXOSC4, EXOSC5, EXOSC6, EXOSC7, EXOSC8 and EXOSC9; within the complex interacts with EXOSC2, EXOSC7 and EXOSC9. The catalytically inactive RNA exosome core complex (Exo-9) associates with the catalytic subunit EXOSC10/RRP6. Exo-9 may associate with DIS3 to form the nucleolar exosome complex, or DIS3L to form the cytoplasmic exosome complex. Exo-9 is formed by a hexameric base ring consisting of the heterodimers EXOSC4-EXOSC9, EXOSC5-EXOSC8 and EXOSC6-EXOSC7, and a cap ring consisting of EXOSC1, EXOSC2 and EXOSC3. The RNA exosome complex associates with cofactors C1D/RRP47, MPHOSPH6/MPP6 and MTREX/MTR4. Interacts with DDX60. Interacts with DIS3; the interaction is direct.

The protein resides in the cytoplasm. The protein localises to the nucleus. It localises to the nucleolus. Its subcellular location is the nucleoplasm. In terms of biological role, non-catalytic component of the RNA exosome complex which has 3'-&gt;5' exoribonuclease activity and participates in a multitude of cellular RNA processing and degradation events. In the nucleus, the RNA exosome complex is involved in proper maturation of stable RNA species such as rRNA, snRNA and snoRNA, in the elimination of RNA processing by-products and non-coding 'pervasive' transcripts, such as antisense RNA species and promoter-upstream transcripts (PROMPTs), and of mRNAs with processing defects, thereby limiting or excluding their export to the cytoplasm. The RNA exosome may be involved in Ig class switch recombination (CSR) and/or Ig variable region somatic hypermutation (SHM) by targeting AICDA deamination activity to transcribed dsDNA substrates. In the cytoplasm, the RNA exosome complex is involved in general mRNA turnover and specifically degrades inherently unstable mRNAs containing AU-rich elements (AREs) within their 3' untranslated regions, and in RNA surveillance pathways, preventing translation of aberrant mRNAs. It seems to be involved in degradation of histone mRNA. The catalytic inactive RNA exosome core complex of 9 subunits (Exo-9) is proposed to play a pivotal role in the binding and presentation of RNA for ribonucleolysis, and to serve as a scaffold for the association with catalytic subunits and accessory proteins or complexes. EXOSC4 binds to ARE-containing RNAs. The sequence is that of Exosome complex component RRP41 (Exosc4) from Mus musculus (Mouse).